Consider the following 178-residue polypeptide: MNATPEKADDLIVVGKIFSVHGVRGEVKVYSFTDPIENLLDYPRWTLRHEGKVKQVELVSGRGSQKGLVVKLKGLDDRDEARLLSGHEICISRSLLPNLATDEYYWYQLVGLKVINQDEHLFGKIDHLLETGANDVLVVKPCAGSLDDRERLLPYTGQCVLAVDLEAGVMRVEWDADF.

Positions 101–178 (TDEYYWYQLV…VMRVEWDADF (78 aa)) constitute a PRC barrel domain.

The protein belongs to the RimM family. In terms of assembly, binds ribosomal protein uS19.

It localises to the cytoplasm. Its function is as follows. An accessory protein needed during the final step in the assembly of 30S ribosomal subunit, possibly for assembly of the head region. Essential for efficient processing of 16S rRNA. May be needed both before and after RbfA during the maturation of 16S rRNA. It has affinity for free ribosomal 30S subunits but not for 70S ribosomes. The protein is Ribosome maturation factor RimM of Pseudomonas entomophila (strain L48).